The primary structure comprises 95 residues: 6 kDa early secretory antigenic target homolog (95 aa).

It belongs to the WXG100 family. ESAT-6 subfamily. Forms a tight 1:1 complex with EsxB.

Its subcellular location is the secreted. Functionally, a secreted protein that might play a role in virulence. The sequence is that of 6 kDa early secretory antigenic target homolog (esxA) from Mycobacterium leprae (strain TN).